The primary structure comprises 533 residues: CTP synthase (533 aa).

The segment at 1-269 is amidoligase domain; it reads MKKNLKILVI…HEILSSKLNI (269 aa). Residue serine 16 coordinates CTP. Serine 16 contributes to the UTP binding site. ATP is bound by residues 17–22 and aspartate 73; that span reads GIGKGV. Mg(2+) is bound by residues aspartate 73 and glutamate 143. CTP contacts are provided by residues 150–152, 190–195, and lysine 226; these read DME and KSKPTQ. Residues 190–195 and lysine 226 each bind UTP; that span reads KSKPTQ. One can recognise a Glutamine amidotransferase type-1 domain in the interval 304–533; that stretch reads YAELDDSYAS…LFLGLIKACI (230 aa). Glycine 355 is a binding site for L-glutamine. Cysteine 382 serves as the catalytic Nucleophile; for glutamine hydrolysis. L-glutamine-binding positions include 383 to 386, glutamate 406, and arginine 466; that span reads LGLQ. Active-site residues include histidine 511 and glutamate 513.

Belongs to the CTP synthase family. Homotetramer.

It carries out the reaction UTP + L-glutamine + ATP + H2O = CTP + L-glutamate + ADP + phosphate + 2 H(+). It catalyses the reaction L-glutamine + H2O = L-glutamate + NH4(+). The enzyme catalyses UTP + NH4(+) + ATP = CTP + ADP + phosphate + 2 H(+). It functions in the pathway pyrimidine metabolism; CTP biosynthesis via de novo pathway; CTP from UDP: step 2/2. Allosterically activated by GTP, when glutamine is the substrate; GTP has no effect on the reaction when ammonia is the substrate. The allosteric effector GTP functions by stabilizing the protein conformation that binds the tetrahedral intermediate(s) formed during glutamine hydrolysis. Inhibited by the product CTP, via allosteric rather than competitive inhibition. In terms of biological role, catalyzes the ATP-dependent amination of UTP to CTP with either L-glutamine or ammonia as the source of nitrogen. Regulates intracellular CTP levels through interactions with the four ribonucleotide triphosphates. This is CTP synthase from Borreliella burgdorferi (strain ATCC 35210 / DSM 4680 / CIP 102532 / B31) (Borrelia burgdorferi).